The sequence spans 277 residues: Phosphoenolpyruvate synthase regulatory protein (277 aa).

Residue 157–164 participates in ADP binding; it reads GVSRCGKT.

Belongs to the pyruvate, phosphate/water dikinase regulatory protein family. PSRP subfamily.

It catalyses the reaction [pyruvate, water dikinase] + ADP = [pyruvate, water dikinase]-phosphate + AMP + H(+). The enzyme catalyses [pyruvate, water dikinase]-phosphate + phosphate + H(+) = [pyruvate, water dikinase] + diphosphate. Bifunctional serine/threonine kinase and phosphorylase involved in the regulation of the phosphoenolpyruvate synthase (PEPS) by catalyzing its phosphorylation/dephosphorylation. The chain is Phosphoenolpyruvate synthase regulatory protein from Escherichia coli O17:K52:H18 (strain UMN026 / ExPEC).